We begin with the raw amino-acid sequence, 422 residues long: Cotranscriptional regulator ARB2A homolog (422 aa).

The first 19 residues, 1-19 (MKLEIKCFIICKVLPLVWL), serve as a signal peptide directing secretion. Residues 213 to 253 (KSKVPADQPSPDSSDEPAEKRERRERNPKETKKRRDFYEKY) form a disordered region. Residues 229–242 (PAEKRERRERNPKE) show a composition bias toward basic and acidic residues. The Nucleophile role is filled by Ser299. The interval 403 to 422 (NTKTKPTPTRRSNRIKHEDL) is disordered.

This sequence belongs to the ARB2A family.

The protein localises to the nucleus. It localises to the cytoplasm. May play role in the regulation of alternative splicing. May have hydrolase activity. The protein is Cotranscriptional regulator ARB2A homolog (arb2a) of Xenopus tropicalis (Western clawed frog).